The following is a 178-amino-acid chain: ATP synthase subunit delta (178 aa).

The protein belongs to the ATPase delta chain family. F-type ATPases have 2 components, F(1) - the catalytic core - and F(0) - the membrane proton channel. F(1) has five subunits: alpha(3), beta(3), gamma(1), delta(1), epsilon(1). F(0) has three main subunits: a(1), b(2) and c(10-14). The alpha and beta chains form an alternating ring which encloses part of the gamma chain. F(1) is attached to F(0) by a central stalk formed by the gamma and epsilon chains, while a peripheral stalk is formed by the delta and b chains.

It is found in the cell inner membrane. Its function is as follows. F(1)F(0) ATP synthase produces ATP from ADP in the presence of a proton or sodium gradient. F-type ATPases consist of two structural domains, F(1) containing the extramembraneous catalytic core and F(0) containing the membrane proton channel, linked together by a central stalk and a peripheral stalk. During catalysis, ATP synthesis in the catalytic domain of F(1) is coupled via a rotary mechanism of the central stalk subunits to proton translocation. In terms of biological role, this protein is part of the stalk that links CF(0) to CF(1). It either transmits conformational changes from CF(0) to CF(1) or is implicated in proton conduction. This Nitrosomonas eutropha (strain DSM 101675 / C91 / Nm57) protein is ATP synthase subunit delta.